Here is a 308-residue protein sequence, read N- to C-terminus: Pseudouridine-5'-phosphate glycosidase (308 aa).

E25 functions as the Proton donor in the catalytic mechanism. Positions 86 and 106 each coordinate substrate. D142 is a Mn(2+) binding site. 144–146 serves as a coordination point for substrate; sequence SAD. The active-site Nucleophile is the K163.

The protein belongs to the pseudouridine-5'-phosphate glycosidase family. In terms of assembly, homotrimer. It depends on Mn(2+) as a cofactor.

It catalyses the reaction D-ribose 5-phosphate + uracil = psi-UMP + H2O. In terms of biological role, catalyzes the reversible cleavage of pseudouridine 5'-phosphate (PsiMP) to ribose 5-phosphate and uracil. Functions biologically in the cleavage direction, as part of a pseudouridine degradation pathway. This chain is Pseudouridine-5'-phosphate glycosidase, found in Symbiobacterium thermophilum (strain DSM 24528 / JCM 14929 / IAM 14863 / T).